Reading from the N-terminus, the 63-residue chain is Beta-defensin 3 (63 aa).

The first 20 residues, 1–20 (MRIHYLLFSFLLVLLSPLSA), serve as a signal peptide directing secretion. A propeptide spanning residues 21 to 22 (FS) is cleaved from the precursor. Disulfide bonds link Cys-31–Cys-59, Cys-38–Cys-52, and Cys-42–Cys-60.

The protein belongs to the beta-defensin family.

The protein resides in the secreted. In terms of biological role, has bactericidal activity. In Rattus norvegicus (Rat), this protein is Beta-defensin 3 (Defb3).